Here is a 640-residue protein sequence, read N- to C-terminus: G protein-coupled receptor kinase 1 (640 aa).

The tract at residues 1–201 is N-terminal; that stretch reads MEIENIVANT…LEKRPVDKHT (201 aa). Residues 52–187 enclose the RGS domain; the sequence is YAFVVEKQPI…IQTMYFHRFL (136 aa). Positions 202 to 469 constitute a Protein kinase domain; that stretch reads FRLYRVLGKG…AEEIRAHPFF (268 aa). ATP-binding positions include 208–216 and K231; that span reads LGKGGFGEV. D327 functions as the Proton acceptor in the catalytic mechanism. One can recognise an AGC-kinase C-terminal domain in the interval 479-544; it reads EPVPWKKMEA…GCVSIPWQSE (66 aa). The segment at 610–640 is disordered; the sequence is GVDQQQPSTSAKPAAVRSSRAASASGRTSMI. The segment covering 619–640 has biased composition (low complexity); it reads SAKPAAVRSSRAASASGRTSMI.

It belongs to the protein kinase superfamily. AGC Ser/Thr protein kinase family. GPRK subfamily.

It carries out the reaction [G-protein-coupled receptor] + ATP = [G-protein-coupled receptor]-phosphate + ADP + H(+). In terms of biological role, specifically phosphorylates the activated forms of G protein-coupled receptors. In Caenorhabditis briggsae, this protein is G protein-coupled receptor kinase 1 (grk-1).